Reading from the N-terminus, the 537-residue chain is uncharacterized protein (537 aa).

4 disordered regions span residues 1–33 (MEPGSKLSEDETFSQTFNEEEQEDSRNKDILAF), 71–98 (SSPPSVRVPRSRRNRRNSRVDSEARKRQ), 197–220 (SHNNMASSNTQSNTQLSEMESEEK), and 516–537 (GRQRSSRYKSHVHKTNTSEEQN). Serine 72 is modified (phosphoserine). Over residues 88–98 (SRVDSEARKRQ) the composition is skewed to basic and acidic residues. Residues 197-214 (SHNNMASSNTQSNTQLSE) are compositionally biased toward polar residues. The segment covering 516 to 529 (GRQRSSRYKSHVHK) has biased composition (basic residues).

It belongs to the NAD kinase family.

This is an uncharacterized protein from Schizosaccharomyces pombe (strain 972 / ATCC 24843) (Fission yeast).